Here is a 513-residue protein sequence, read N- to C-terminus: Zinc finger protein 395 (513 aa).

Over residues 17–29 (ARVLGPSASEGPS) the composition is skewed to low complexity. The interval 17 to 56 (ARVLGPSASEGPSAAPPSEPLLEGAAPQPFTTSDDTPCQE) is disordered. Residues 45 to 55 (PFTTSDDTPCQ) show a composition bias toward polar residues. The Nuclear export signal motif lies at 165–174 (MDEMMAAMVL). Residues 204–269 (KESGDISDSG…DPFLLDEPAP (66 aa)) are disordered. Low complexity predominate over residues 209–229 (ISDSGSSTTSGHWSGSSGVST). Serine 248 carries the post-translational modification Phosphoserine. Residues 280–305 (YKCLWPNCGKVLRSIVGIKRHVKALH) form a C2H2-type zinc finger. A disordered region spans residues 335–394 (AAAAAAAGTPVPGTPTSEPAPTPSMTGLPLSALPPPLHKAQSSGPEHPGPESSLPSGALS). Residues 348–359 (TPTSEPAPTPSM) are compositionally biased toward polar residues. Phosphoserine occurs at positions 376 and 449. A compositionally biased stretch (low complexity) spans 376–391 (SSGPEHPGPESSLPSG).

In terms of assembly, interacts with repression-mediating E2 binding site P2 of human papillomavirus type 8 (HPV8). As to expression, widely expressed.

It is found in the cytoplasm. Its subcellular location is the nucleus. Its function is as follows. Plays a role in papillomavirus genes transcription. In Homo sapiens (Human), this protein is Zinc finger protein 395 (ZNF395).